The primary structure comprises 491 residues: Glutamine synthetase (491 aa).

In terms of domain architecture, GS beta-grasp spans 23 to 111; that stretch reads NNVRQVLCAF…MFGNVYEAWG (89 aa). In terms of domain architecture, GS catalytic spans 119 to 491; it reads PRGYVAKRYE…PWEFMKYFDI (373 aa). Positions 143 and 145 each coordinate Mg(2+). Position 225 (E225) interacts with ATP. The Mg(2+) site is built by E230 and E238. L-glutamate-binding positions include 282-283 and A283; that span reads NA. H287 is a binding site for Mg(2+). ATP is bound by residues 289-291 and S291; that span reads HQS. Residues R344, E350, and R362 each coordinate L-glutamate. Residues R362 and R367 each contribute to the ATP site. E381 is a binding site for Mg(2+). R383 serves as a coordination point for L-glutamate.

It belongs to the glutamine synthetase family. In terms of assembly, oligomer of 12 subunits arranged in the form of two hexagons. It depends on Mg(2+) as a cofactor.

The protein localises to the cytoplasm. The catalysed reaction is L-glutamate + NH4(+) + ATP = L-glutamine + ADP + phosphate + H(+). In terms of biological role, probably involved in nitrogen metabolism via ammonium assimilation. Catalyzes the ATP-dependent biosynthesis of glutamine from glutamate and ammonia. Beta-glutamate is a much poorer substrate than alpha-glutamate. In Archaeoglobus fulgidus (strain ATCC 49558 / DSM 4304 / JCM 9628 / NBRC 100126 / VC-16), this protein is Glutamine synthetase.